The chain runs to 590 residues: Protein Spindly (590 aa).

Residues 1–401 adopt a coiled-coil conformation; sequence MSDLEDEIKV…SMARMKALSE (401 aa). Residues 446 to 590 form a disordered region; sequence NKAQVQKRRR…KTMANECAQQ (145 aa). Composition is skewed to basic and acidic residues over residues 483–497 and 518–527; these read SNEK…HPVE and RESKSVRICE. Polar residues-rich tracts occupy residues 541–554 and 572–590; these read VNDS…QTHQ and QQPT…CAQQ.

It belongs to the Spindly family.

It is found in the chromosome. Its subcellular location is the centromere. The protein localises to the kinetochore. In terms of biological role, required for the localization of dynein and dynactin to the mitotic kintochore. Dynein is believed to control the initial lateral interaction between the kinetochore and spindle microtubules and to facilitate the subsequent formation of end-on kinetochore-microtubule attachments mediated by the NDC80 complex. May act as an adapter protein linking the dynein motor complex to various cargos. This chain is Protein Spindly (spdl1), found in Danio rerio (Zebrafish).